The chain runs to 431 residues: Na(+)/H(+) antiporter NhaA 1 (431 aa).

A run of 11 helical transmembrane segments spans residues 17 to 37 (LSGILLLFVTLFAIIVANSNF), 56 to 76 (FIISMPLRLWINDGLMALFFL), 98 to 118 (MFPFVASLGGMIVPASIYIAL), 123 to 143 (FIGFGIPMGTDTAFAIAMLIL), 154 to 174 (LFLVALAVIDDLGAIIVVATV), 182 to 202 (EYFLHAAFVYGLIWLLNYFDV), 209 to 229 (LFLGIFLWIFIHETGVHATIA), 301 to 321 (FSAFFIMPIFAFSNAGVLLDF), 329 to 349 (MIVLGVALGLLVGKPLGIFGF), 373 to 393 (VGFIAGIGFTMSIFIANLAFI), and 400 to 420 (AIKIGIFTASFMATVIGMILI).

It belongs to the NhaA Na(+)/H(+) (TC 2.A.33) antiporter family.

The protein resides in the cell inner membrane. It carries out the reaction Na(+)(in) + 2 H(+)(out) = Na(+)(out) + 2 H(+)(in). Functionally, na(+)/H(+) antiporter that extrudes sodium in exchange for external protons. The chain is Na(+)/H(+) antiporter NhaA 1 from Aliarcobacter butzleri (strain RM4018) (Arcobacter butzleri).